The chain runs to 101 residues: Urease subunit beta (101 aa).

The protein belongs to the urease beta subunit family. In terms of assembly, heterotrimer of UreA (gamma), UreB (beta) and UreC (alpha) subunits. Three heterotrimers associate to form the active enzyme.

It is found in the cytoplasm. It carries out the reaction urea + 2 H2O + H(+) = hydrogencarbonate + 2 NH4(+). Its pathway is nitrogen metabolism; urea degradation; CO(2) and NH(3) from urea (urease route): step 1/1. The chain is Urease subunit beta from Cupriavidus necator (strain ATCC 17699 / DSM 428 / KCTC 22496 / NCIMB 10442 / H16 / Stanier 337) (Ralstonia eutropha).